The sequence spans 728 residues: MDKTHSSQGKCPVMHGGNTSVTTNNMDWWPKALNLDILHQHDKKTDPMDPTFNYSEAFKTLDLAAVKQDLYALMTDSQDWWPADWGHYGGLMIRMAWHSAGTYRIADGRGGAGTGNQRFAPLNSWPDNANLDKARRLLWPIKKKYGNKLSWADLIILAGNVAYESMGLKTYGFAGGRADIWHPEKDIYWGSEKQWLAPSDNPNSRYSGERDLENPLAAVMMGLIYVNPEGVDGNPDPLRTAQDIRITFARMAMDDEETVALTAGGHTVGKCHGNGKAQNLGPEPEAEDVEAQGLGWLNKHGRGVGRNTVTSGIEGAWTTHPTQWDNGYFSLLLGYDWELKKSPAGAWQWEPINIKEEDKPVDVEDPTIRHNPIMTDADMAMKMDPEYRKISEKFYKDPAYFSEVFARAWFKLTHRDLGPKSRYLGPEVPAEDLIWQDPIPQVDYRLSDDDITALKAKILASGLSIAELVTTAWDSARTFRGSDYRGGANGARIRLAPQKDWEGNEPVRLQKVLKVLTDIQTGLSQKVSIADLIVLGGTAAVEKAAQDAGVNIRVPFASGRGDASQEMTDIESFAVLEPLHDAYRNWQKKDYVVQPEELMLDRTQLMGLTAHEMTVLIGGMRVLGANYAGSAHGVFTDRVGVLSNDFFVNLTDMSYNWKPAGNNLYQIIERKTGTVKWTATRVDLVFGSNSVLRSYAEIYAQDDAKEKFVHDFVNAWTKVMNADRFDLA.

Residues 97–225 constitute a cross-link (tryptophyl-tyrosyl-methioninium (Trp-Tyr) (with M-251)); that stretch reads WHSAGTYRIA…LAAVMMGLIY (129 aa). His98 acts as the Proton acceptor in catalysis. The segment at residues 225–251 is a cross-link (tryptophyl-tyrosyl-methioninium (Tyr-Met) (with W-97)); the sequence is YVNPEGVDGNPDPLRTAQDIRITFARM. His266 contacts heme b.

This sequence belongs to the peroxidase family. Peroxidase/catalase subfamily. As to quaternary structure, homodimer or homotetramer. Heme b is required as a cofactor. Formation of the three residue Trp-Tyr-Met cross-link is important for the catalase, but not the peroxidase activity of the enzyme.

It carries out the reaction H2O2 + AH2 = A + 2 H2O. It catalyses the reaction 2 H2O2 = O2 + 2 H2O. Functionally, bifunctional enzyme with both catalase and broad-spectrum peroxidase activity. The protein is Catalase-peroxidase of Shewanella putrefaciens (strain CN-32 / ATCC BAA-453).